The primary structure comprises 171 residues: MELRRGGVGSQARARRMDGDSRDGGGGCKDAGSEDYENLPTSASLSTHMTAGAMAGILEHSVMYPVDSVKTRMQSLNPDPKAHYTSVYGALKKIIRTEGFWRPLRGLNVMMMGAGPAHAMYFACYENMKRTLNAVFHHQGNSHLANGICKRLSGVRKVSPSTDPSPGFSSL.

Residues Met1 to Pro40 are disordered. One copy of the Solcar repeat lies at Ala43–Thr131. 3 helical membrane-spanning segments follow: residues Leu45–Tyr64, Arg105–Tyr125, and His143–Asp163.

The protein belongs to the mitochondrial carrier (TC 2.A.29) family. As to quaternary structure, interacts with ACB10; this interaction stabilizes SLC25A37 and enhances the function of SLC25A37 to import mitochondrial iron during erythroid differentiation.

The protein resides in the mitochondrion inner membrane. The catalysed reaction is Fe(2+)(in) = Fe(2+)(out). Functionally, mitochondrial iron transporter that specifically mediates iron uptake in developing erythroid cells, thereby playing an essential role in heme biosynthesis. This is Mitoferrin-1 (SLC25A37) from Bos taurus (Bovine).